Here is a 345-residue protein sequence, read N- to C-terminus: Serine proteinase inhibitor 2 (345 aa).

Belongs to the serpin family. Poxviruses subfamily.

Its subcellular location is the host cytoplasm. In terms of biological role, viral serpin that inhibits both cysteine and serine proteinases involved in the regulation of host inflammatory and apoptosis processes. Major anti-apoptotic protein which inhibits both intrinsic and extrinsic pathways and strongly cleaves host CASP1 and CASP8 but is a rather poor inhibitor of host CASP3. Prevents the proteolytic activity of host interleukin-1-beta converting enzyme (ICE) and ICE-like enzymes. Can also block apoptosis through host tumor necrosis factor (TNF) receptor. The inhibition of host ICE is an example of a 'cross-class' interaction, in which a serpin inhibits a non-serine proteinase. Also inhibits granzyme B. This Vaccinia virus (strain Western Reserve) (VACV) protein is Serine proteinase inhibitor 2 (OPG199).